Here is a 489-residue protein sequence, read N- to C-terminus: Cytochrome P450 monooxygenase AMT3 (489 aa).

The helical transmembrane segment at 292-312 (LFMVAGTETTITALSGLVFLL) threads the bilayer. Residue Cys436 participates in heme binding.

Belongs to the cytochrome P450 family. Heme serves as cofactor.

Its subcellular location is the membrane. It functions in the pathway mycotoxin biosynthesis. Cytochrome P450 monooxygenase; part of the gene clusters that mediate the biosynthesis of AM-toxins, host-selective toxins (HSTs) causing Alternaria blotch on apple, a worldwide distributed disease. AM-toxins are cyclic depsipeptides containing the 3 residues 2-hydroxy-isovaleric acid (2-HIV), dehydroalanine, L-alanine which are common for all 3 AM-toxins I to III. The fourth precursor is L-alpha-amino-methoxyphenyl-valeric acid (L-Amv) for AM-toxin I, L-alpha-amino-phenyl-valeric acid (L-Apv) for AM-toxin II, and L-alpha-amino-hydroxyphenyl-valeric acid (L-Ahv) for AM-toxin III. AM-toxins have two target sites for affecting susceptible apple cells; they cause invagination of the plasma membrane and electrolyte loss and chloroplast disorganization. The non-ribosomal peptide synthetase AMT1 contains 4 catalytic modules and is responsible for activation of each residue in AM-toxin. The aldo-keto reductase AMT2 catalyzes the conversion of 2-keto-isovaleric acid (2-KIV) to 2-hydroxy-isovaleric acid (2-HIV), one of the precursor residues incorporated by AMT1 during AM-toxin biosynthesis, by reduction of its ketone to an alcohol. The cytochrome P450 monooxygenase AMT3 and the thioesterase AMT4 are also important for AM-toxin production, but their exact function within the AM-toxin biosynthesis are not known yet. Up to 21 proteins (including AMT1 to AMT4) are predicted to be involved in AM-toxin biosynthesis since their expression ishighly up-regulated in AM-toxin-producing cultures. This is Cytochrome P450 monooxygenase AMT3 from Alternaria alternata (Alternaria rot fungus).